An 81-amino-acid polypeptide reads, in one-letter code: Cytotoxin 2 (81 aa).

Residues 1–21 form the signal peptide; it reads MKTLLLTLVVVTIVCLDLGYT. Cystine bridges form between Cys24–Cys42, Cys35–Cys59, Cys63–Cys74, and Cys75–Cys80.

It belongs to the three-finger toxin family. Short-chain subfamily. Type IA cytotoxin sub-subfamily. In terms of assembly, monomer in solution; Homodimer and oligomer in the presence of negatively charged lipids forming a pore with a size ranging between 20 and 30 Angstroms. Expressed by the venom gland.

The protein resides in the secreted. It is found in the target cell membrane. Its function is as follows. Basic protein that binds to cell membrane and depolarizes cardiomyocytes. It also shows lytic activities, but 2-fold less important than that of CTX-A4. It binds to the integrin alpha-V/beta-3 (ITGAV/ITGB3) with a moderate affinity. It may interact with sulfatides in the cell membrane which induces pore formation and cell internalization and is responsible for cytotoxicity in cardiomyocytes. It may also target the mitochondrial membrane and induce mitochondrial swelling and fragmentation. The chain is Cytotoxin 2 from Naja atra (Chinese cobra).